A 149-amino-acid polypeptide reads, in one-letter code: Aspartate 1-decarboxylase (149 aa).

Catalysis depends on Ser-25, which acts as the Schiff-base intermediate with substrate; via pyruvic acid. Ser-25 carries the pyruvic acid (Ser) modification. Thr-57 lines the substrate pocket. The Proton donor role is filled by Tyr-58. 73 to 75 (GAA) lines the substrate pocket. The disordered stretch occupies residues 119 to 149 (GDPAAALPGDPSSLRGDVLDPAGARGLGGGA).

It belongs to the PanD family. As to quaternary structure, heterooctamer of four alpha and four beta subunits. It depends on pyruvate as a cofactor. Post-translationally, is synthesized initially as an inactive proenzyme, which is activated by self-cleavage at a specific serine bond to produce a beta-subunit with a hydroxyl group at its C-terminus and an alpha-subunit with a pyruvoyl group at its N-terminus.

The protein localises to the cytoplasm. It catalyses the reaction L-aspartate + H(+) = beta-alanine + CO2. It functions in the pathway cofactor biosynthesis; (R)-pantothenate biosynthesis; beta-alanine from L-aspartate: step 1/1. Functionally, catalyzes the pyruvoyl-dependent decarboxylation of aspartate to produce beta-alanine. This is Aspartate 1-decarboxylase from Parafrankia sp. (strain EAN1pec).